A 402-amino-acid chain; its full sequence is Subtilisin-like protease 9 (402 aa).

Residues 1 to 18 (MGFFRILFSLSLCALSLA) form the signal peptide. A propeptide spanning residues 19–120 (IPSKLIGLEN…VEVDRVVKLD (102 aa)) is cleaved from the precursor. Positions 36 to 119 (SYIVVMKSAV…YVEVDRVVKL (84 aa)) constitute an Inhibitor I9 domain. The Peptidase S8 domain occupies 130-402 (SWGLGRISHR…KKLLYNGSGA (273 aa)). Residues aspartate 162 and histidine 193 each act as charge relay system in the active site. A glycan (N-linked (GlcNAc...) asparagine) is linked at asparagine 254. The Charge relay system role is filled by serine 348. N-linked (GlcNAc...) asparagine glycans are attached at residues asparagine 390 and asparagine 398.

It belongs to the peptidase S8 family.

It is found in the secreted. Secreted subtilisin-like serine protease with keratinolytic activity that contributes to pathogenicity. This is Subtilisin-like protease 9 (SUB9) from Arthroderma gypseum (strain ATCC MYA-4604 / CBS 118893) (Microsporum gypseum).